We begin with the raw amino-acid sequence, 245 residues long: Ribonuclease 3 (245 aa).

An RNase III domain is found at 17–146; it reads FAKKMNELGF…FVGALYLDQG (130 aa). E59 provides a ligand contact to Mg(2+). Residue D63 is part of the active site. 2 residues coordinate Mg(2+): D132 and E135. Residue E135 is part of the active site. Residues 172-241 enclose the DRBM domain; sequence DFKTQFQEYV…AESAYSKLKS (70 aa). Residues 217–245 are disordered; the sequence is ATGQGKTKKESEQKAAESAYSKLKSNNNL.

This sequence belongs to the ribonuclease III family. In terms of assembly, homodimer. Requires Mg(2+) as cofactor.

The protein localises to the cytoplasm. The enzyme catalyses Endonucleolytic cleavage to 5'-phosphomonoester.. Functionally, digests double-stranded RNA. Involved in the processing of primary rRNA transcript to yield the immediate precursors to the large and small rRNAs (23S and 16S). Processes some mRNAs, and tRNAs when they are encoded in the rRNA operon. Processes pre-crRNA and tracrRNA of type II CRISPR loci if present in the organism. The protein is Ribonuclease 3 of Staphylococcus haemolyticus (strain JCSC1435).